The sequence spans 458 residues: Protein amnionless (458 aa).

Residues M1–A19 form the signal peptide. The Extracellular segment spans residues A20–G362. N-linked (GlcNAc...) asparagine glycosylation occurs at N27. Disulfide bonds link C43/C96, C137/C213, C205/C211, C223/C249, C234/C250, and C239/C253. Residues S67–A87 form an interaction with CUBN region. The 52-residue stretch at Q203–G254 folds into the VWFC domain. Residue N355 is glycosylated (N-linked (GlcNAc...) asparagine). Residues L363–L383 form a helical membrane-spanning segment. At H384–A458 the chain is on the cytoplasmic side.

In terms of assembly, interacts (via extracellular region) with CUBN/cubilin. This gives rise to a huge complex containing one AMN chain and three CUBN chains. In terms of processing, N-glycosylated. A soluble form arises by proteolytic removal of the membrane anchor. As to expression, expressed in polarized epithelial cells which are specialized in resorption or transport, specifically kidney proximal tubules and intestinal epithelium.

Its subcellular location is the apical cell membrane. It is found in the cell membrane. The protein resides in the endosome membrane. The protein localises to the membrane. It localises to the coated pit. Its function is as follows. Membrane-bound component of the endocytic receptor formed by AMN and CUBN. Required for normal CUBN glycosylation and trafficking to the cell surface. The complex formed by AMN and CUBN is required for efficient absorption of vitamin B12. Required for normal CUBN-mediated protein transport in the kidney. The sequence is that of Protein amnionless (Amn) from Mus musculus (Mouse).